A 240-amino-acid chain; its full sequence is Ribonuclease HII (240 aa).

Residues 7–215 (RYAIGIDEAG…LKRIAPGWYV (209 aa)) form the RNase H type-2 domain. Asp-13, Glu-14, and Asp-112 together coordinate a divalent metal cation.

It belongs to the RNase HII family. It depends on Mn(2+) as a cofactor. Mg(2+) serves as cofactor.

It is found in the cytoplasm. It carries out the reaction Endonucleolytic cleavage to 5'-phosphomonoester.. In terms of biological role, endonuclease that specifically degrades the RNA of RNA-DNA hybrids. In Hyperthermus butylicus (strain DSM 5456 / JCM 9403 / PLM1-5), this protein is Ribonuclease HII.